The following is a 602-amino-acid chain: MPVREVSRLPELNEILEKSDSNRLIIVDFFANWCGPCRMISPAFERLSMEFGNATFLKVNTDLARDIVMRYSISAMPTFLFFKNKQQVDSVRGANESAIISTIRKHYSSTPANPNAASDEEKKFLERFVGYTELRKMHTDEVFKALARSVMPDGISDRLENGEDEKKVLQELLDWFKNDFFTWFDRPTCLKCTLKCTTEGLNGTPTKEEKEGGAGRVEVFICNGCNSEMRFPRYNDPSKLLQTRTGRCGEWANCFGLILSAAGLENRFVLDTTDHVWNEVYLKKEQRWIHVDPCENTMDRPLLYTRGWKKQLKYCIAYGHDHVTDVTWRYVFDSKKLVTQERVRQGVLENFLGKLNARQMAGATEERKRELAVRRVCELMGMMVQEAKNQRIGWEKLGEDMGGRTTGSKEWRRARGELGDNPEAQVLGKPIEFRIQNDANHVEFSYDVNRDSYSQTPEKGFVAQTFECNNIQRKVENDWKMVYLCREDGKKEGNISWHFNLAPLVATDSKKTIEKVEIRMAGIRKFENGNILIIACLGDTCMRIPASGNLTIEDPKPEVLKITVTLSGGERNQAFQHAQLFRTEKDDVAEATESMVVRVYMK.

The Thioredoxin domain occupies 2-130 (PVREVSRLPE…EKKFLERFVG (129 aa)). The Zn(2+) site is built by Cys-189, Cys-192, Cys-222, and Cys-225. Cys-248 functions as the Nucleophile in the catalytic mechanism. Catalysis depends on residues His-275 and Asp-292. In terms of domain architecture, PAW spans 400–602 (DMGGRTTGSK…ESMVVRVYMK (203 aa)).

The protein belongs to the transglutaminase-like superfamily. PNGase family. Zn(2+) serves as cofactor.

It localises to the cytoplasm. It is found in the endoplasmic reticulum. The catalysed reaction is Hydrolysis of an N(4)-(acetyl-beta-D-glucosaminyl)asparagine residue in which the glucosamine residue may be further glycosylated, to yield a (substituted) N-acetyl-beta-D-glucosaminylamine and a peptide containing an aspartate residue.. Its function is as follows. Specifically deglycosylates the denatured form of N-linked glycoproteins in the cytoplasm and assists their proteasome-mediated degradation. Cleaves the beta-aspartyl-glucosamine (GlcNAc) of the glycan and the amide side chain of Asn, converting Asn to Asp. Prefers proteins containing high-mannose over those bearing complex type oligosaccharides. Can recognize misfolded proteins in the endoplasmic reticulum that are exported to the cytosol to be destroyed and deglycosylate them, while it has no activity toward native proteins. Deglycosylation is a prerequisite for subsequent proteasome-mediated degradation of some, but not all, misfolded glycoproteins. Also displays oxidoreductase (thioredoxin) activity. The sequence is that of Peptide-N(4)-(N-acetyl-beta-glucosaminyl)asparagine amidase (png-1) from Caenorhabditis briggsae.